The chain runs to 306 residues: Glutathione transport system permease protein GsiC (306 aa).

The Cytoplasmic segment spans residues 1–8 (MLNYVLKR). A helical membrane pass occupies residues 9–29 (LLGLIPTLLIVAVLVFLFVHL). Topologically, residues 30–102 (LPGDPARLIA…SRFLPTLWLT (73 aa)) are periplasmic. One can recognise an ABC transmembrane type-1 domain in the interval 95–292 (FLPTLWLTIT…LEFILINLVV (198 aa)). The helical transmembrane segment at 103 to 123 (ITSMIWAVLFGMAIGIAAAVW) threads the bilayer. The Cytoplasmic segment spans residues 124 to 134 (RNRWPDRLGMT). Residues 135 to 155 (LAVTGISFPAFALGMLLMQIF) traverse the membrane as a helical segment. Over 156–168 (SVDLGWLPTVGAD) the chain is Periplasmic. A helical membrane pass occupies residues 169–189 (SWQHYILPSLTLGAAVASVMA). Residues 190–228 (RFTRSSFVDVLSEDYMRTARAKGVSETWVVLKHGLRNAM) are Cytoplasmic-facing. A helical transmembrane segment spans residues 229–249 (IPVVTMMGLQFGFLLGGSIVV). The Periplasmic portion of the chain corresponds to 250–278 (EKVFNWPGLGRLLVDSVDMRDYPVIQAEV). Residues 279–299 (LLFSLEFILINLVVDVLYAAI) form a helical membrane-spanning segment. The Cytoplasmic portion of the chain corresponds to 300–306 (NPAIRYK).

This sequence belongs to the binding-protein-dependent transport system permease family. As to quaternary structure, the complex is composed of two ATP-binding proteins (GsiA), two transmembrane proteins (GsiC and GsiD) and a solute-binding protein (GsiB).

It is found in the cell inner membrane. Functionally, part of the ABC transporter complex GsiABCD involved in glutathione import. Probably responsible for the translocation of the substrate across the membrane. In Salmonella paratyphi A (strain ATCC 9150 / SARB42), this protein is Glutathione transport system permease protein GsiC.